Reading from the N-terminus, the 2293-residue chain is Protein Ycf2 (2293 aa).

Gly1642–Ser1649 is an ATP binding site.

The protein belongs to the Ycf2 family.

It is found in the plastid. The protein resides in the chloroplast stroma. Its function is as follows. Probable ATPase of unknown function. Its presence in a non-photosynthetic plant (Epifagus virginiana) and experiments in tobacco indicate that it has an essential function which is probably not related to photosynthesis. The sequence is that of Protein Ycf2 from Platanus occidentalis (Sycamore).